The primary structure comprises 75 residues: Brevinin-2SN2 (75 aa).

The first 22 residues, 1–22, serve as a signal peptide directing secretion; that stretch reads MFTMKKSLLFLFFLGTISLSFC. Residues 23–40 constitute a propeptide, removed in mature form; that stretch reads EEERGADEDDGGEMTEEE. An intrachain disulfide couples Cys-69 to Cys-75.

It belongs to the frog skin active peptide (FSAP) family. Brevinin subfamily. Expressed by the skin glands.

The protein resides in the secreted. Its function is as follows. Antimicrobial peptide. Active against some Gram-negative and a variety of Gram-positive bacterial strains. Active against fungus C.glabrata 090902 but not against C.albicans ATCC 10231. Shows hemolytic activity against human erythrocytes. The protein is Brevinin-2SN2 of Sylvirana spinulosa (Fine-spined frog).